The primary structure comprises 137 residues: Holo-[acyl-carrier-protein] synthase (137 aa).

Residues Asp8 and Glu58 each contribute to the Mg(2+) site.

It belongs to the P-Pant transferase superfamily. AcpS family. Requires Mg(2+) as cofactor.

The protein localises to the cytoplasm. The catalysed reaction is apo-[ACP] + CoA = holo-[ACP] + adenosine 3',5'-bisphosphate + H(+). Its function is as follows. Transfers the 4'-phosphopantetheine moiety from coenzyme A to a Ser of acyl-carrier-protein. In Lactobacillus delbrueckii subsp. bulgaricus (strain ATCC 11842 / DSM 20081 / BCRC 10696 / JCM 1002 / NBRC 13953 / NCIMB 11778 / NCTC 12712 / WDCM 00102 / Lb 14), this protein is Holo-[acyl-carrier-protein] synthase.